The sequence spans 298 residues: dTDP-4-dehydrorhamnose reductase (298 aa).

NADH is bound by residues 10 to 12 (GQV), 35 to 36 (DL), and 59 to 61 (AYT). Residues 11 to 12 (QV), 35 to 36 (DL), 59 to 61 (AYT), and tyrosine 98 contribute to the NADPH site. 100-101 (TD) contributes to the dTDP-beta-L-rhamnose binding site. Residues tyrosine 124 and lysine 128 each coordinate NADH. NADPH-binding residues include tyrosine 124 and lysine 128. Tyrosine 124 (proton donor/acceptor) is an active-site residue. DTDP-beta-L-rhamnose is bound at residue tryptophan 149.

This sequence belongs to the dTDP-4-dehydrorhamnose reductase family. As to quaternary structure, homodimer. Mg(2+) is required as a cofactor.

It catalyses the reaction dTDP-beta-L-rhamnose + NADP(+) = dTDP-4-dehydro-beta-L-rhamnose + NADPH + H(+). Its pathway is carbohydrate biosynthesis; dTDP-L-rhamnose biosynthesis. The protein operates within bacterial outer membrane biogenesis; LPS O-antigen biosynthesis. Involved in the biosynthesis of the dTDP-L-rhamnose which is an important component of lipopolysaccharide (LPS). Catalyzes the reduction of dTDP-6-deoxy-L-lyxo-4-hexulose to yield dTDP-L-rhamnose. This is dTDP-4-dehydrorhamnose reductase from Burkholderia thailandensis (strain ATCC 700388 / DSM 13276 / CCUG 48851 / CIP 106301 / E264).